The following is a 982-amino-acid chain: ATP-dependent DNA helicase Q5 (982 aa).

In terms of domain architecture, Helicase ATP-binding spans 39 to 213 (MAVVKGAEDV…FAALHLKQPV (175 aa)). 52–59 (MPTGAGKS) serves as a coordination point for ATP. The DEAH box motif lies at 157–160 (DEAH). The Helicase C-terminal domain maps to 241 to 398 (NLRDFCLKAL…NKPSDKATLL (158 aa)). Zn(2+)-binding residues include Cys-412, Cys-428, Cys-432, and Cys-435. Phosphoserine occurs at positions 489 and 492. Residues 491 to 621 (GSGDEGRDEA…ASKDGQLYDM (131 aa)) form an interaction with POLR2A region. Thr-527 is modified (phosphothreonine). The segment at 653–726 (PKRVGAGFSK…ALGSSVNCGD (74 aa)) is interaction with RAD51. 2 disordered regions span residues 675–797 (GKSH…PGKC) and 812–893 (QTEG…AQEP). Ser-728 carries the phosphoserine; by CDK1 modification.

Belongs to the helicase family. RecQ subfamily. As to quaternary structure, monomer. Interacts with TOP2A, TOP3A and TOP3B. Interacts with RNA polymerase II subunit POLR2A. Identified in a complex with the RNA polymerase II core bound to DNA. Interacts with RAD51. Interacts with WRN; this interaction stimulates WRN helicase activity on DNA fork duplexes. Interacts with MUS1; this interaction promotes MUS81-dependent mitotic DNA synthesis. Zn(2+) is required as a cofactor. Phosphorylated by CDK1 at Ser-728; this phosphorylation is required for RECQL5-mediated disruption of RAD51 filaments on stalled replication forks.

The protein localises to the nucleus. It localises to the nucleoplasm. The enzyme catalyses Couples ATP hydrolysis with the unwinding of duplex DNA by translocating in the 3'-5' direction.. The catalysed reaction is ATP + H2O = ADP + phosphate + H(+). DNA helicase that plays an important role in DNA replication, transcription and repair. Binds to the RNA polymerase II subunit POLR2A during transcription elongation and suppresses transcription-associated genomic instability. Also associates with POLR1A and enforces the stability of ribosomal DNA arrays. Plays an important role in mitotic chromosome separation after cross-over events and cell cycle progress. Mechanistically, removes RAD51 filaments protecting stalled replication forks at common fragile sites and stimulates MUS81-EME1 endonuclease leading to mitotic DNA synthesis. Required for efficient DNA repair, including repair of inter-strand cross-links. Stimulates DNA decatenation mediated by TOP2A. Prevents sister chromatid exchange and homologous recombination. In Mus musculus (Mouse), this protein is ATP-dependent DNA helicase Q5 (Recql5).